Here is a 790-residue protein sequence, read N- to C-terminus: Ice-structuring glycoprotein (790 aa).

Residues 1–5 constitute a propeptide that is removed on maturation; sequence VTAAP.

Post-translationally, O-glycosylated; contains disaccharide galactose-N-acetylgalactosamine attached to threonines in AFGP8 and AFGP7. In terms of tissue distribution, synthesized by the liver and secreted into the blood from which they become distributed to almost the entire extracellular space.

It localises to the secreted. Its function is as follows. Antifreeze proteins lower the blood freezing point. The sequence is that of Ice-structuring glycoprotein (afgp8) from Notothenia neglecta (Yellowbelly rockcod).